The sequence spans 77 residues: U8-lycotoxin-Ls1f (77 aa).

The signal sequence occupies residues 1-20 (MKLIIFTGLVLFAIVSLIEV). Positions 21–26 (QADNER) are excised as a propeptide.

The protein belongs to the neurotoxin 19 (CSTX) family. 08 (U8-Lctx) subfamily. Contains 4 disulfide bonds. As to expression, expressed by the venom gland.

It localises to the secreted. The protein is U8-lycotoxin-Ls1f of Lycosa singoriensis (Wolf spider).